Here is a 232-residue protein sequence, read N- to C-terminus: Lipopolysaccharide core heptose(II) kinase WaaY (232 aa).

Belongs to the protein kinase superfamily. RfaY/WaaY family.

The catalysed reaction is alpha-D-Glc-(1-&gt;3)-[L-alpha-D-Hep-(1-&gt;7)]-L-alpha-D-Hep-(1-&gt;3)-4-O-PO3(2-)-L-alpha-D-Hep-(1-&gt;5)-[alpha-Kdo-(2-&gt;4)]-alpha-Kdo-(2-&gt;6)-lipid A + ATP = alpha-D-Glc-(1-&gt;3)-[L-alpha-D-Hep-(1-&gt;7)]-4-O-PO3(2-)-L-alpha-D-Hep-(1-&gt;3)-4-O-PO3(2-)-L-alpha-D-Hep-(1-&gt;5)-[alpha-Kdo-(2-&gt;4)]-alpha-Kdo-(2-&gt;6)-lipid A + ADP + H(+). Its pathway is bacterial outer membrane biogenesis; LPS core biosynthesis. In terms of biological role, kinase involved in the biosynthesis of the core oligosaccharide region of lipopolysaccharide (LPS). Catalyzes the phosphorylation of the second heptose unit (HepII) of the inner core. This Escherichia coli (strain K12) protein is Lipopolysaccharide core heptose(II) kinase WaaY.